The sequence spans 105 residues: Flagellar transcriptional regulator FlhD (105 aa).

It belongs to the FlhD family. Homodimer; disulfide-linked. Forms a heterohexamer composed of two FlhC and four FlhD subunits. Each FlhC binds a FlhD dimer, forming a heterotrimer, and a hexamer assembles by dimerization of two heterotrimers.

The protein localises to the cytoplasm. In terms of biological role, functions in complex with FlhC as a master transcriptional regulator that regulates transcription of several flagellar and non-flagellar operons by binding to their promoter region. Activates expression of class 2 flagellar genes, including fliA, which is a flagellum-specific sigma factor that turns on the class 3 genes. Also regulates genes whose products function in a variety of physiological pathways. This Cupriavidus necator (strain ATCC 17699 / DSM 428 / KCTC 22496 / NCIMB 10442 / H16 / Stanier 337) (Ralstonia eutropha) protein is Flagellar transcriptional regulator FlhD.